Reading from the N-terminus, the 314-residue chain is Methionyl-tRNA formyltransferase (314 aa).

113–116 contributes to the (6S)-5,6,7,8-tetrahydrofolate binding site; it reads SLLP.

The protein belongs to the Fmt family.

The enzyme catalyses L-methionyl-tRNA(fMet) + (6R)-10-formyltetrahydrofolate = N-formyl-L-methionyl-tRNA(fMet) + (6S)-5,6,7,8-tetrahydrofolate + H(+). Functionally, attaches a formyl group to the free amino group of methionyl-tRNA(fMet). The formyl group appears to play a dual role in the initiator identity of N-formylmethionyl-tRNA by promoting its recognition by IF2 and preventing the misappropriation of this tRNA by the elongation apparatus. The chain is Methionyl-tRNA formyltransferase from Chlorobaculum tepidum (strain ATCC 49652 / DSM 12025 / NBRC 103806 / TLS) (Chlorobium tepidum).